The sequence spans 291 residues: Transmembrane O-methyltransferase (291 aa).

A helical transmembrane segment spans residues 31 to 51 (VGTMSPAIALAFLPLVVTLLV). S-adenosyl-L-methionine-binding positions include Glu137, 139–140 (GT), Ser145, Glu163, and Ser193.

This sequence belongs to the class I-like SAM-binding methyltransferase superfamily. Cation-dependent O-methyltransferase family. Interacts with LHFPL5, PCDH15, TMC1, TMC2 and TMIE. Interacts directly with TMC1. The interaction of TOMT with TMC1 and TMC2 is required for the transportation of TMC1/2 into the stereocilia of hair cells.

Its subcellular location is the membrane. The protein resides in the cytoplasm. The protein localises to the endoplasmic reticulum. The catalysed reaction is a catechol + S-adenosyl-L-methionine = a guaiacol + S-adenosyl-L-homocysteine + H(+). In terms of biological role, catalyzes the O-methylation, and thereby the inactivation, of catecholamine neurotransmitters and catechol hormones. Required for auditory function. Component of the cochlear hair cell's mechanotransduction (MET) machinery. Involved in the assembly of the asymmetric tip-link MET complex. Required for transportation of TMC1 and TMC2 proteins into the mechanically sensitive stereocilia of the hair cells. The function in MET is independent of the enzymatic activity. This is Transmembrane O-methyltransferase from Pan troglodytes (Chimpanzee).